Reading from the N-terminus, the 292-residue chain is tRNA (guanine-N(7)-)-methyltransferase (292 aa).

The segment at 1 to 54 is disordered; the sequence is MLKRDQSEMDIEAETANMGKEEKESFVHKRQKYRQEQEEKRLAAKKGVSFEQPE. A compositionally biased stretch (basic and acidic residues) spans 19–42; it reads GKEEKESFVHKRQKYRQEQEEKRL. S-adenosyl-L-methionine contacts are provided by residues glycine 110, 133–134, 168–169, and cysteine 188; these read EI and NA. Aspartate 191 is a catalytic residue. Position 266–268 (266–268) interacts with S-adenosyl-L-methionine; the sequence is TEE.

It belongs to the class I-like SAM-binding methyltransferase superfamily. TrmB family. In terms of assembly, forms a complex with TRM82.

Its subcellular location is the nucleus. The catalysed reaction is guanosine(46) in tRNA + S-adenosyl-L-methionine = N(7)-methylguanosine(46) in tRNA + S-adenosyl-L-homocysteine. It participates in tRNA modification; N(7)-methylguanine-tRNA biosynthesis. Functionally, catalyzes the formation of N(7)-methylguanine at position 46 (m7G46) in tRNA. This is tRNA (guanine-N(7)-)-methyltransferase from Yarrowia lipolytica (strain CLIB 122 / E 150) (Yeast).